Here is a 109-residue protein sequence, read N- to C-terminus: Enhancer of rudimentary homolog (109 aa).

It belongs to the E(R) family. Homodimer.

In terms of biological role, may have a role in the cell cycle. The sequence is that of Enhancer of rudimentary homolog from Arabidopsis thaliana (Mouse-ear cress).